The primary structure comprises 143 residues: MKFLIVLAVAVACASADVSHIAKSDEYAAPVVKSSYDITPEGHFQFNYETGNGIYAQAEGAVKNVNSEYPAIEVKGAYKYTSPDGQPIDLAYVADENGYQPQGSHLPTPHPIPEAIARALAYIEAHPPSPSVVERKVVANLLG.

An N-terminal signal peptide occupies residues 1-16; it reads MKFLIVLAVAVACASA. A Chitin-binding type R&amp;R domain is found at 41–110; the sequence is EGHFQFNYET…PQGSHLPTPH (70 aa).

In terms of biological role, component of the cuticle of the larva of Bombyx mori. The polypeptide is Larval cuticle protein LCP-17 (LCP17) (Bombyx mori (Silk moth)).